A 379-amino-acid polypeptide reads, in one-letter code: Homoserine O-succinyltransferase (379 aa).

Residues 51–360 (NAVLICHALS…DAPQGHDAFL (310 aa)) form the AB hydrolase-1 domain. Ser157 functions as the Nucleophile in the catalytic mechanism. Arg227 contacts substrate. Active-site residues include Asp323 and His356. Residue Asp357 coordinates substrate.

Belongs to the AB hydrolase superfamily. MetX family. In terms of assembly, homodimer.

It is found in the cytoplasm. The catalysed reaction is L-homoserine + succinyl-CoA = O-succinyl-L-homoserine + CoA. It functions in the pathway amino-acid biosynthesis; L-methionine biosynthesis via de novo pathway; O-succinyl-L-homoserine from L-homoserine: step 1/1. In terms of biological role, transfers a succinyl group from succinyl-CoA to L-homoserine, forming succinyl-L-homoserine. The polypeptide is Homoserine O-succinyltransferase (Pseudomonas fluorescens (strain SBW25)).